The primary structure comprises 129 residues: Acyl carrier protein 2, chloroplastic (129 aa).

The N-terminal 49 residues, 1 to 49, are a transit peptide targeting the chloroplast; sequence MASAAASAVSFARPVKAICVNSVSFSALRKDNVSFRLQPVPQRFSVCCA. The Carrier domain maps to 52 to 127; the sequence is KETVEKVCDI…DAANLIDSLV (76 aa). The residue at position 87 (S87) is an O-(pantetheine 4'-phosphoryl)serine.

This sequence belongs to the acyl carrier protein (ACP) family. Post-translationally, 4'-phosphopantetheine is transferred from CoA to a specific serine of apo-ACP by acpS. This modification is essential for activity because fatty acids are bound in thioester linkage to the sulfhydryl of the prosthetic group.

Its subcellular location is the plastid. The protein localises to the chloroplast. It functions in the pathway lipid metabolism; fatty acid biosynthesis. Its function is as follows. Carrier of the growing fatty acid chain in fatty acid biosynthesis. This is Acyl carrier protein 2, chloroplastic (ACL1.2) from Hordeum vulgare (Barley).